The chain runs to 252 residues: 29 kDa protein (252 aa).

A disordered region spans residues 222–252 (YDGPYRPATTRPKSLLSSEDVKRASNKKNSS).

This Beta vulgaris (Sugar beet) protein is 29 kDa protein.